A 310-amino-acid chain; its full sequence is MEPGNHTAVTKFILLGLTDDPTLCVIFFVFFLGIYIVTLVGNISIINLVRSCPQLQTPMYMFLSHLAFVDIGYSTSVTPIMLIGFIVHETGLPVHACEAQLCSVVTFGTAECFLLAAMAYDRYVAICSPLLYSTHMSSQICLLLVGASYVGGCVNAWTFTGCLLSLSFCGPNKIDHFFCDFSPLLKLSCSDVSIIGIIPSISAGSIIVVTVFVISVSYIYILITILKMRSTEGRHKAFSTCTSHLTAVTLYYGTITFIYVMPKSSYSTKQNRVVSLFYTVVIPMLNPLIYSLRNRDVKEALRKATLRIYS.

The Extracellular segment spans residues methionine 1–valine 25. Asparagine 5 carries an N-linked (GlcNAc...) asparagine glycan. The helical transmembrane segment at isoleucine 26–isoleucine 46 threads the bilayer. At asparagine 47–glutamine 54 the chain is on the cytoplasmic side. A helical membrane pass occupies residues leucine 55–threonine 75. Residues serine 76–alanine 99 are Extracellular-facing. A disulfide bond links cysteine 97 and cysteine 189. Residues glutamine 100 to tyrosine 120 traverse the membrane as a helical segment. The Cytoplasmic segment spans residues aspartate 121–serine 133. The chain crosses the membrane as a helical span at residues threonine 134–valine 154. The Extracellular segment spans residues asparagine 155–glycine 196. The chain crosses the membrane as a helical span at residues isoleucine 197 to serine 217. The Cytoplasmic portion of the chain corresponds to tyrosine 218–alanine 237. A helical membrane pass occupies residues phenylalanine 238–isoleucine 258. The Extracellular segment spans residues tyrosine 259–asparagine 271. A helical membrane pass occupies residues arginine 272–leucine 292. Topologically, residues arginine 293–serine 310 are cytoplasmic.

Belongs to the G-protein coupled receptor 1 family.

The protein localises to the cell membrane. In terms of biological role, potential odorant receptor. In Mus musculus (Mouse), this protein is Olfactory receptor 5P1.